We begin with the raw amino-acid sequence, 359 residues long: tRNA N6-adenosine threonylcarbamoyltransferase (359 aa).

Fe cation is bound by residues histidine 115 and histidine 119. Residues 137-141 (LVSGG), aspartate 170, glycine 183, and asparagine 283 each bind substrate. Aspartate 311 is a binding site for Fe cation. Residues 328–359 (APDSLDLAPRSRWPLDEKSAPLIGTGRRGAKA) form a disordered region.

Belongs to the KAE1 / TsaD family. The cofactor is Fe(2+).

It localises to the cytoplasm. The catalysed reaction is L-threonylcarbamoyladenylate + adenosine(37) in tRNA = N(6)-L-threonylcarbamoyladenosine(37) in tRNA + AMP + H(+). Its function is as follows. Required for the formation of a threonylcarbamoyl group on adenosine at position 37 (t(6)A37) in tRNAs that read codons beginning with adenine. Is involved in the transfer of the threonylcarbamoyl moiety of threonylcarbamoyl-AMP (TC-AMP) to the N6 group of A37, together with TsaE and TsaB. TsaD likely plays a direct catalytic role in this reaction. The protein is tRNA N6-adenosine threonylcarbamoyltransferase of Brucella anthropi (strain ATCC 49188 / DSM 6882 / CCUG 24695 / JCM 21032 / LMG 3331 / NBRC 15819 / NCTC 12168 / Alc 37) (Ochrobactrum anthropi).